The chain runs to 203 residues: Small ribosomal subunit protein uS4 (203 aa).

Positions 20 to 45 (LPGLTRKRPKNTNPPGMHGAERKKKS) are disordered. Residues 92 to 155 (MRLDCIVFRL…SSRKLVAAYA (64 aa)) form the S4 RNA-binding domain.

The protein belongs to the universal ribosomal protein uS4 family. Part of the 30S ribosomal subunit. Contacts protein S5. The interaction surface between S4 and S5 is involved in control of translational fidelity.

One of the primary rRNA binding proteins, it binds directly to 16S rRNA where it nucleates assembly of the body of the 30S subunit. In terms of biological role, with S5 and S12 plays an important role in translational accuracy. This Synechococcus sp. (strain JA-3-3Ab) (Cyanobacteria bacterium Yellowstone A-Prime) protein is Small ribosomal subunit protein uS4.